A 411-amino-acid polypeptide reads, in one-letter code: Peptide chain release factor subunit 1 (411 aa).

This sequence belongs to the eukaryotic release factor 1 family. In terms of assembly, heterodimer of two subunits, one of which binds GTP.

The protein localises to the cytoplasm. Its function is as follows. Directs the termination of nascent peptide synthesis (translation) in response to the termination codons UAA, UAG and UGA. The sequence is that of Peptide chain release factor subunit 1 from Methanosphaera stadtmanae (strain ATCC 43021 / DSM 3091 / JCM 11832 / MCB-3).